We begin with the raw amino-acid sequence, 595 residues long: Adenine deaminase (595 aa).

This sequence belongs to the metallo-dependent hydrolases superfamily. Adenine deaminase family. Homodimer. Mn(2+) serves as cofactor.

It carries out the reaction adenine + H2O + H(+) = hypoxanthine + NH4(+). The sequence is that of Adenine deaminase from Serratia proteamaculans (strain 568).